A 146-amino-acid chain; its full sequence is Linear conopeptide (146 aa).

Positions 1-19 (MLRLIIAAAVLVSACLAYP) are cleaved as a signal peptide. The propeptide occupies 20 to 34 (QRREGAPADAANLQS). A Methionine sulfoxide; partial; in Cn2 modification is found at Met-40. 2 consecutive propeptides follow at residues 58 to 80 (FLPFNPNLQMGYKRDFDENLEKR) and 104 to 146 (FLHN…DKEQ). Residues 107-146 (NEKGDKHPFANVDSADTDLGQFEPSAENKNGEFRFFDKEQ) are disordered. Positions 135-146 (KNGEFRFFDKEQ) are enriched in basic and acidic residues.

In terms of tissue distribution, expressed by the venom duct.

The protein resides in the secreted. This Conus consors (Singed cone) protein is Linear conopeptide.